A 359-amino-acid polypeptide reads, in one-letter code: NF-kappa-B inhibitor beta (359 aa).

Residues serine 19 and serine 23 each carry the phosphoserine; by RPS6KA1 modification. 3 ANK repeats span residues 57-86 (DGDT…GTEY), 93-122 (LGQT…GVLV), and 126-155 (GGHT…SHPR). The tract at residues 153 to 194 (HPRDASDTYLTQSQDCTPDTSHAPAAVDSQPNPENEEEPRDE) is disordered. Over residues 160 to 172 (TYLTQSQDCTPDT) the composition is skewed to polar residues. ANK repeat units follow at residues 206–235 (DGHT…DLNK), 240–269 (CGRT…DPTA), and 273–302 (GGRT…PEPE). The tract at residues 298–359 (APEPEDEDDK…KPLPDDPNPA (62 aa)) is disordered. Serine 313 and serine 318 each carry phosphoserine. The segment covering 318 to 331 (SDSDNRDEGDEYDD) has biased composition (acidic residues). Residues 344 to 359 (PPSPASKPLPDDPNPA) are compositionally biased toward pro residues.

This sequence belongs to the NF-kappa-B inhibitor family. In terms of assembly, interacts with THRB (via ligand-binding domain). Interacts with RELA and REL. Interacts with COMMD1. Interacts with inhibitor kappa B-interacting Ras-like NKIRAS1 and NKIRAS2. In terms of processing, phosphorylated by RPS6KA1; followed by degradation. Interaction with NKIRAS1 and NKIRAS2 probably prevents phosphorylation. As to expression, highly expressed in testis followed by spleen.

It is found in the cytoplasm. Its subcellular location is the nucleus. Its function is as follows. Inhibits NF-kappa-B by complexing with and trapping it in the cytoplasm. However, the unphosphorylated form resynthesized after cell stimulation is able to bind NF-kappa-B allowing its transport to the nucleus and protecting it to further NFKBIA-dependent inactivation. Association with inhibitor kappa B-interacting NKIRAS1 and NKIRAS2 prevent its phosphorylation rendering it more resistant to degradation, explaining its slower degradation. This is NF-kappa-B inhibitor beta (Nfkbib) from Mus musculus (Mouse).